Reading from the N-terminus, the 171-residue chain is Nicotinamide-nucleotide adenylyltransferase (171 aa).

It belongs to the archaeal NMN adenylyltransferase family.

It is found in the cytoplasm. The enzyme catalyses beta-nicotinamide D-ribonucleotide + ATP + H(+) = diphosphate + NAD(+). It participates in cofactor biosynthesis; NAD(+) biosynthesis; NAD(+) from nicotinamide D-ribonucleotide: step 1/1. The chain is Nicotinamide-nucleotide adenylyltransferase from Methanococcus maripaludis (strain DSM 14266 / JCM 13030 / NBRC 101832 / S2 / LL).